Reading from the N-terminus, the 387-residue chain is Dual specificity mitogen-activated protein kinase kinase mek-2 (387 aa).

The tract at residues 1 to 37 (MSSGKRRNPLGLSLPPTVNEQSESGEATAEEATATVP) is disordered. The segment covering 16–25 (PTVNEQSESG) has biased composition (polar residues). Over residues 26 to 35 (EATAEEATAT) the composition is skewed to low complexity. The Protein kinase domain occupies 73-360 (LQTEGELGHG…LKSLTADVFF (288 aa)). Residues 79-87 (LGHGNGGVV) and Lys102 contribute to the ATP site. Asp195 functions as the Proton acceptor in the catalytic mechanism. Phosphoserine occurs at positions 223 and 227.

It belongs to the protein kinase superfamily. STE Ser/Thr protein kinase family. MAP kinase kinase subfamily. In terms of assembly, interacts with ksr-1.

It catalyses the reaction L-seryl-[protein] + ATP = O-phospho-L-seryl-[protein] + ADP + H(+). It carries out the reaction L-threonyl-[protein] + ATP = O-phospho-L-threonyl-[protein] + ADP + H(+). The enzyme catalyses L-tyrosyl-[protein] + ATP = O-phospho-L-tyrosyl-[protein] + ADP + H(+). Activated by tyrosine and threonine phosphorylation catalyzed by MAP kinase kinase kinases. Functions in the let-60 Ras signaling pathway; acts downstream of lin-45 raf kinase, but before the sur-1/mpk-1 gene product in controlling vulval cell differentiation. Required for progression of developing oocytes through the pachytene stage. Plays a role in responses to M.nematophilum-mediated bacterial infection by promoting tail swelling and preventing constipation. Involved in fluid homeostasis. Positively regulates lifespan upstream of mpk-1. This chain is Dual specificity mitogen-activated protein kinase kinase mek-2 (mek-2), found in Caenorhabditis elegans.